A 657-amino-acid chain; its full sequence is Splicing factor Cactin (657 aa).

Residues 1–15 show a composition bias toward basic residues; sequence MGKDSKKHKKERRRE. Disordered stretches follow at residues 1-83, 369-406, and 472-503; these read MGKD…EDTL, QESE…ISKK, and ADVD…QGAS. Coiled coils occupy residues 23–77 and 352–403; these read SDEE…RKDA and RLQL…DEKI. Basic and acidic residues predominate over residues 26-60; that stretch reads ERLQKRLAEQRSLKKDEKRRQKEEMKKNESAEEKR. The span at 61–72 shows a compositional bias: basic residues; that stretch reads ARRMEKKMRKDA. The span at 389 to 401 shows a compositional bias: acidic residues; sequence EEEEEEEEDEDDE. The segment covering 489–503 has biased composition (low complexity); it reads PSSSAASSGAPQGAS.

The protein belongs to the CACTIN family. In terms of tissue distribution, expressed in pharynx, intestine, vulva and spermatheca (at protein level).

The protein localises to the nucleus. It localises to the cytoplasm. In terms of biological role, plays a role in pre-mRNA splicing by facilitating excision of a subset of introns. Plays a role during early embryonic development. Required for the distal tip cell migration at the end of larval development and for gonad morphogenesis. The sequence is that of Splicing factor Cactin (cacn-1) from Caenorhabditis elegans.